Reading from the N-terminus, the 157-residue chain is 2-C-methyl-D-erythritol 2,4-cyclodiphosphate synthase (157 aa).

The a divalent metal cation site is built by D8 and H10. 4-CDP-2-C-methyl-D-erythritol 2-phosphate-binding positions include 8-10 and 34-35; these read DVH and HS. H42 is a binding site for a divalent metal cation. Residues 56–58, 61–65, 100–106, 132–135, F139, and R142 contribute to the 4-CDP-2-C-methyl-D-erythritol 2-phosphate site; these read DIG, FPDTD, AQAPKMA, and TTTE.

It belongs to the IspF family. Homotrimer. A divalent metal cation serves as cofactor.

It catalyses the reaction 4-CDP-2-C-methyl-D-erythritol 2-phosphate = 2-C-methyl-D-erythritol 2,4-cyclic diphosphate + CMP. It functions in the pathway isoprenoid biosynthesis; isopentenyl diphosphate biosynthesis via DXP pathway; isopentenyl diphosphate from 1-deoxy-D-xylulose 5-phosphate: step 4/6. Functionally, involved in the biosynthesis of isopentenyl diphosphate (IPP) and dimethylallyl diphosphate (DMAPP), two major building blocks of isoprenoid compounds. Catalyzes the conversion of 4-diphosphocytidyl-2-C-methyl-D-erythritol 2-phosphate (CDP-ME2P) to 2-C-methyl-D-erythritol 2,4-cyclodiphosphate (ME-CPP) with a corresponding release of cytidine 5-monophosphate (CMP). In Pseudomonas fluorescens (strain ATCC BAA-477 / NRRL B-23932 / Pf-5), this protein is 2-C-methyl-D-erythritol 2,4-cyclodiphosphate synthase.